A 221-amino-acid polypeptide reads, in one-letter code: Lipoprotein-releasing system ATP-binding protein LolD (221 aa).

The region spanning 6 to 220 (LILKNISKHY…YKLKHGLLNI (215 aa)) is the ABC transporter domain. An ATP-binding site is contributed by 42 to 49 (GSSGSGKS).

This sequence belongs to the ABC transporter superfamily. Lipoprotein translocase (TC 3.A.1.125) family. The complex is composed of two ATP-binding proteins (LolD) and two transmembrane proteins (LolC and LolE).

Its subcellular location is the cell inner membrane. Functionally, part of the ABC transporter complex LolCDE involved in the translocation of mature outer membrane-directed lipoproteins, from the inner membrane to the periplasmic chaperone, LolA. Responsible for the formation of the LolA-lipoprotein complex in an ATP-dependent manner. This Rickettsia felis (strain ATCC VR-1525 / URRWXCal2) (Rickettsia azadi) protein is Lipoprotein-releasing system ATP-binding protein LolD.